The chain runs to 521 residues: HTH-type transcriptional regulatory protein TyrR (521 aa).

In terms of domain architecture, ACT spans 2 to 72; that stretch reads RLEVFCQDRI…GVTDVRTVPY (71 aa). A PAS domain is found at 78–120; sequence EHRVLSALLVAMPEPVFSVDLRTKVELANPAAQNLFNLDENKI. The region spanning 207 to 436 is the Sigma-54 factor interaction domain; it reads IVAVTPRMRQ…LKNALYRALT (230 aa). Residues 235–242 and 298–307 contribute to the ATP site; these read GDTGTGKD and ANGGSVLLDE. Positions 489–509 form a DNA-binding region, H-T-H motif; that stretch reads STRKLAKRLGVSHTAIANKLR.

As to quaternary structure, homodimer. In presence of tyrosine (or high concentrations of phenylalanine or tryptophan) and ATP, it self-associates to form an hexamer.

Its subcellular location is the cytoplasm. Functionally, dual transcriptional regulator of the TyrR regulon, which includes a number of genes coding for proteins involved in the biosynthesis or transport of the three aromatic amino acids, phenylalanine, tyrosine and tryptophan. These three aromatic amino acids act as effectors which bind to the TyrR protein to form an active regulatory protein. Acts by binding specifically to TyrR boxes in the promoter region of the target genes. The sequence is that of HTH-type transcriptional regulatory protein TyrR from Enterobacter agglomerans (Erwinia herbicola).